The primary structure comprises 176 residues: Large ribosomal subunit protein bL17m (176 aa).

A mitochondrion-targeting transit peptide spans 1 to 8 (MRLSLAAA).

Belongs to the bacterial ribosomal protein bL17 family. In terms of assembly, component of the mitochondrial ribosome large subunit (39S) which comprises a 16S rRNA and about 50 distinct proteins.

Its subcellular location is the mitochondrion. This is Large ribosomal subunit protein bL17m (Mrpl17) from Mus musculus (Mouse).